The chain runs to 153 residues: Endoribonuclease YbeY (153 aa).

Residues histidine 114, histidine 118, and histidine 124 each contribute to the Zn(2+) site.

This sequence belongs to the endoribonuclease YbeY family. Requires Zn(2+) as cofactor.

Its subcellular location is the cytoplasm. Functionally, single strand-specific metallo-endoribonuclease involved in late-stage 70S ribosome quality control and in maturation of the 3' terminus of the 16S rRNA. The chain is Endoribonuclease YbeY from Shewanella sp. (strain MR-7).